The chain runs to 337 residues: MLDAFDRYPLTFGPTPIEKLERLTDHLGGKVQLYAKREDCNSGLAFGGNKLRKLEYIIPDAIASGADTLVSIGGVQSNHTRMVAAVAAKIGFKCRLVQEAWVPHEDAVYDRVGNIMLSRIMGADVRLVDDGFDIGIRRSWEEAIEEVKAAGGKPYAIPAGASVHKYGGLGYVGFAEEVRAQEAALGFAFDYIVVCTVTGSSHAGMAVGFAKDGRADHVIGIDASFTPDQTRAQVLEIAQRTADLVKLGREMRPEDIVLVEDYAYPVYGVPSEETKDAIRLVGRLEGMITDPVYEGKSMQGMIDLVKKGYFPEGSKVLYAHLGGAPALNGYGYAFRNG.

Position 50 is an N6-(pyridoxal phosphate)lysine (Lys50). Ser77 (nucleophile) is an active-site residue.

The protein belongs to the ACC deaminase/D-cysteine desulfhydrase family. In terms of assembly, homotrimer. Pyridoxal 5'-phosphate serves as cofactor.

The enzyme catalyses 1-aminocyclopropane-1-carboxylate + H2O = 2-oxobutanoate + NH4(+). Its function is as follows. Catalyzes a cyclopropane ring-opening reaction, the irreversible conversion of 1-aminocyclopropane-1-carboxylate (ACC) to ammonia and alpha-ketobutyrate. Allows growth on ACC as a nitrogen source. The protein is 1-aminocyclopropane-1-carboxylate deaminase of Allorhizobium ampelinum (strain ATCC BAA-846 / DSM 112012 / S4) (Agrobacterium vitis (strain S4)).